A 906-amino-acid polypeptide reads, in one-letter code: Probable helicase HelY (906 aa).

The region spanning 26–184 (CSALERGHGV…WIQTVRGDTT (159 aa)) is the Helicase ATP-binding domain. 39 to 46 (APTGAGKT) lines the ATP pocket. The short motif at 132–135 (DEVH) is the DEVH box element. The Helicase C-terminal domain maps to 259–463 (GRPEVIAKLD…SYNMTINLVH (205 aa)).

The protein belongs to the helicase family. SKI2 subfamily.

This is Probable helicase HelY (helY) from Mycobacterium tuberculosis (strain CDC 1551 / Oshkosh).